A 36-amino-acid chain; its full sequence is Photosystem II reaction center protein M (36 aa).

Residues 5-25 traverse the membrane as a helical segment; it reads ILGLIATALFIIIPTSFLLIL.

The protein belongs to the PsbM family. PSII is composed of 1 copy each of membrane proteins PsbA, PsbB, PsbC, PsbD, PsbE, PsbF, PsbH, PsbI, PsbJ, PsbK, PsbL, PsbM, PsbT, PsbX, PsbY, PsbZ, Psb30/Ycf12, at least 3 peripheral proteins of the oxygen-evolving complex and a large number of cofactors. It forms dimeric complexes.

The protein localises to the plastid. It localises to the chloroplast thylakoid membrane. In terms of biological role, one of the components of the core complex of photosystem II (PSII). PSII is a light-driven water:plastoquinone oxidoreductase that uses light energy to abstract electrons from H(2)O, generating O(2) and a proton gradient subsequently used for ATP formation. It consists of a core antenna complex that captures photons, and an electron transfer chain that converts photonic excitation into a charge separation. This subunit is found at the monomer-monomer interface. This chain is Photosystem II reaction center protein M, found in Chlorokybus atmophyticus (Soil alga).